The following is a 317-amino-acid chain: Membrane-associated protein VIPP1, chloroplastic (317 aa).

A coiled-coil region spans residues E92–A246. A disordered region spans residues D265–Y317. The span at P297–Y317 shows a compositional bias: basic and acidic residues.

This sequence belongs to the PspA/Vipp/IM30 family. As to quaternary structure, homomultimer. Complex formation involves interaction via the central alpha-helical domain (71-286). In terms of assembly, (Microbial infection) Interacts with the rice tungro bacilliform virus (RTBV) capsid protein.

It localises to the plastid. It is found in the chloroplast inner membrane. The protein resides in the chloroplast thylakoid membrane. In terms of biological role, required for plastid vesicle formation and thylakoid membrane biogenesis, but not for functional assembly of thylakoid protein complexes. This Oryza sativa subsp. japonica (Rice) protein is Membrane-associated protein VIPP1, chloroplastic.